Consider the following 514-residue polypeptide: 1-pyrroline-5-carboxylate dehydrogenase (514 aa).

Catalysis depends on residues E286 and C320.

Belongs to the aldehyde dehydrogenase family. RocA subfamily.

The catalysed reaction is L-glutamate 5-semialdehyde + NAD(+) + H2O = L-glutamate + NADH + 2 H(+). Its pathway is amino-acid degradation; L-proline degradation into L-glutamate; L-glutamate from L-proline: step 2/2. This chain is 1-pyrroline-5-carboxylate dehydrogenase, found in Staphylococcus aureus (strain MSSA476).